Here is a 231-residue protein sequence, read N- to C-terminus: MAKRGKKYLEAVKLIDRDQAYQVEEALELVKKASVAKFDETVEVAVRLGVDPKKADQQIRGAVVLPNGTGKTQRVLVFAKGEKAKEAEAAGADYVGDEDCINKISQGWFDFDVIVATPDMMAQVGKLGRVLGPKGLMPNPKTGTVTFEVEKAVNDIKAGKVEYRVDKAGNIHVPIGKVSFDTAKLAENFETIIDTLVKAKPAAAKGTYLKNIAVSSTMGPGVKVSTASFGK.

Belongs to the universal ribosomal protein uL1 family. As to quaternary structure, part of the 50S ribosomal subunit.

Functionally, binds directly to 23S rRNA. The L1 stalk is quite mobile in the ribosome, and is involved in E site tRNA release. Its function is as follows. Protein L1 is also a translational repressor protein, it controls the translation of the L11 operon by binding to its mRNA. The protein is Large ribosomal subunit protein uL1 of Halalkalibacterium halodurans (strain ATCC BAA-125 / DSM 18197 / FERM 7344 / JCM 9153 / C-125) (Bacillus halodurans).